The chain runs to 913 residues: Eukaryotic translation initiation factor 3 subunit C (913 aa).

A disordered region spans residues 1–31 (MSRFFANGSDSESESSEEEVQASNFNKANNF). Acidic residues predominate over residues 11–20 (SESESSEEEV). A compositionally biased stretch (polar residues) spans 21–31 (QASNFNKANNF). 4 positions are modified to phosphoserine: S34, S165, S177, and S186. 2 disordered regions span residues 157–195 (FREAPDQESDVDEGEGEAHDSDAERAGADSDGGIGAGTG) and 208–285 (PTKV…EDGE). Acidic residues predominate over residues 162–171 (DQESDVDEGE). A compositionally biased stretch (basic and acidic residues) spans 172 to 184 (GEAHDSDAERAGA). The span at 214–239 (DEDDSDDSIDWDSDTESETESSEDEN) shows a compositional bias: acidic residues. Basic and acidic residues predominate over residues 244-263 (MRERFLKRTTEKEDKDDDKR). Basic residues predominate over residues 264–276 (KDKRKEQKHKVRK). Residues 645–821 (FHMHINLELL…ETVVMHRSEP (177 aa)) enclose the PCI domain. Residues 856–913 (RGNMGNRDRGYNRNQNNQGGNWGGQRRDNRNQRNRNQRGHHKQQQQQQQQQVQTIEEE) form a disordered region. Residues 887-898 (QRNRNQRGHHKQ) are compositionally biased toward basic residues.

The protein belongs to the eIF-3 subunit C family. Component of the eukaryotic translation initiation factor 3 (eIF-3) complex. The eIF-3 complex interacts with pix.

Its subcellular location is the cytoplasm. Its function is as follows. Component of the eukaryotic translation initiation factor 3 (eIF-3) complex, which is involved in protein synthesis of a specialized repertoire of mRNAs and, together with other initiation factors, stimulates binding of mRNA and methionyl-tRNAi to the 40S ribosome. The eIF-3 complex specifically targets and initiates translation of a subset of mRNAs involved in cell proliferation. The chain is Eukaryotic translation initiation factor 3 subunit C from Drosophila virilis (Fruit fly).